Consider the following 130-residue polypeptide: Large ribosomal subunit protein bL20 (130 aa).

Belongs to the bacterial ribosomal protein bL20 family.

Its function is as follows. Binds directly to 23S ribosomal RNA and is necessary for the in vitro assembly process of the 50S ribosomal subunit. It is not involved in the protein synthesizing functions of that subunit. This chain is Large ribosomal subunit protein bL20, found in Solibacter usitatus (strain Ellin6076).